We begin with the raw amino-acid sequence, 149 residues long: 3-dehydroquinate dehydratase (149 aa).

The Proton acceptor role is filled by tyrosine 26. Substrate contacts are provided by asparagine 77, histidine 83, and aspartate 90. Residue histidine 103 is the Proton donor of the active site. Substrate contacts are provided by residues 104–105 (LS) and arginine 114.

It belongs to the type-II 3-dehydroquinase family. As to quaternary structure, homododecamer.

The enzyme catalyses 3-dehydroquinate = 3-dehydroshikimate + H2O. The protein operates within metabolic intermediate biosynthesis; chorismate biosynthesis; chorismate from D-erythrose 4-phosphate and phosphoenolpyruvate: step 3/7. Catalyzes a trans-dehydration via an enolate intermediate. In Haemophilus influenzae (strain ATCC 51907 / DSM 11121 / KW20 / Rd), this protein is 3-dehydroquinate dehydratase (aroQ).